The sequence spans 64 residues: Conotoxin VnMRCL-04 (64 aa).

The N-terminal stretch at 1–22 (MRCLPVFVILLLLIASAPSVDA) is a signal peptide. A propeptide spanning residues 23–48 (RPKTKDDVPLASFHGNAERTLLNILR) is cleaved from the precursor. Trp63 carries the post-translational modification Tryptophan amide.

This sequence belongs to the conotoxin T superfamily. Post-translationally, contains 2 disulfide bonds that can be either 'C1-C3, C2-C4' or 'C1-C4, C2-C3', since these disulfide connectivities have been observed for conotoxins with cysteine framework V (for examples, see AC P0DQQ7 and AC P81755). In terms of tissue distribution, expressed by the venom duct.

Its subcellular location is the secreted. The protein is Conotoxin VnMRCL-04 of Conus ventricosus (Mediterranean cone).